A 130-amino-acid chain; its full sequence is MTTSSYFLLVALGLLLYVCQSSFGGEHVCGSNQPNHPNGKCGSKMADYLEEQCEEEEAAHGGTNDARATTGRALSLSKRRGFLSMLKRRGKRNEASPLQRAGRGIVCECCKNHCTDEEFTEYCPHVTESG.

A signal peptide spans 1-21; it reads MTTSSYFLLVALGLLLYVCQS. Cystine bridges form between C29–C107, C41–C110, C53–C123, and C109–C114. P34 bears the 4-hydroxyproline; partial mark. Residues 59-92 constitute a propeptide, c peptide; sequence AHGGTNDARATTGRALSLSKRRGFLSMLKRRGKR. At E118 the chain carries 4-carboxyglutamate; partial. A Serine amide modification is found at S129.

It belongs to the insulin family. Heterodimer of A and B chains; disulfide-linked. Expressed by the venom gland.

The protein localises to the secreted. This venom insulin facilitates prey capture by rapidly inducing hypoglycemic shock. Intraperitoneal injection of this peptide into zebrafish lowers blood glucose with the same potency than human insulin. In vivo, when applied to water, this peptide reduces overall locomotor activity of zebrafish larvae, observed as a significant decrease in the percentage of time spent swimming and movement frequency. This chain is Con-Ins M1, found in Conus marmoreus (Marble cone).